Reading from the N-terminus, the 620-residue chain is Preterminal protein (620 aa).

A Nuclear localization signal motif is present at residues 356–365; it reads RLPMRRRRRR. At serine 545 the chain carries O-(5'-phospho-DNA)-serine.

Belongs to the adenoviridae terminal protein family. In terms of assembly, heterodimer with the polymerase; this heterodimer binds to bp 9 to 18 of the genome. Interacts with host POU2F1; POU2F1 binds to the auxiliary sequences in the inverted terminal repeats and tethers the pTP-POL heterodimer to the origin DNA thereby participating in the assembly of the pre-initiation complex (POL-TP-DBP-NFIA-POU2F1). Post-translationally, preterminal protein is used to replicate viral genome, upon genomic encapsidation it is processed first into iTP and finally into TP by adenovirus protease.

The protein localises to the host nucleus matrix. Functionally, protein covalently bound to the viral DNA that acts as a primer for viral genomic replication by DNA strand displacement. Assembles on the viral origin of replication in an initiation complex with viral polymerase, DBP, host NFIA and host POU2F1/OCT1. During initiation, the polymerase covalently couples the first dCTP with Ser-580 of pTP. The terminal protein stimulates the template activity over 20 fold compared to protein-free templates. Neo-synthesized viral genomes are linked to two preterminal proteins, one for each 5' end. These new genomes are encapsidated in the nucleus, and during capsid maturation by viral protease, preterminal protein is first cleaved into intermediary (iTP), then into mature TP. May play a role in host nuclear matrix localization of genomic DNA. This is Preterminal protein from Bovine adenovirus 2 (BAdV-2).